The sequence spans 129 residues: Acetophenone carboxylase beta subunit (129 aa).

In terms of assembly, acetophenone carboxylase consists of five subunits; a heterooctameric subcomplex of two alpha (Apc1), two beta (Apc2), two gamma (Apc3) and two delta (Apc4) subunits assembles with the epsilon (Apc5) subunit in an unknown stoichiometry. Mg(2+) serves as cofactor. Mn(2+) is required as a cofactor.

Its subcellular location is the cytoplasm. The catalysed reaction is acetophenone + hydrogencarbonate + 2 ATP + H2O = 3-oxo-3-phenylpropanoate + 2 ADP + 2 phosphate + 2 H(+). Its activity is regulated as follows. Inhibited by zinc ions, carbamoylphosphate and beta,gamma-imido-ATP. Functionally, catalyzes the carboxylation of acetophenone to form 3-oxo-3-phenylpropanoate (benzoylacetate) in the anaerobic catabolism of ethylbenzene. Also carboxylates propiophenone at the same rate and 4-acetyl-pyridine at lower rates. The polypeptide is Acetophenone carboxylase beta subunit (apc2) (Aromatoleum aromaticum (strain DSM 19018 / LMG 30748 / EbN1) (Azoarcus sp. (strain EbN1))).